Here is a 240-residue protein sequence, read N- to C-terminus: Proteasome subunit alpha (240 aa).

It belongs to the peptidase T1A family. In terms of assembly, the 20S proteasome core is composed of 14 alpha and 14 beta subunits that assemble into four stacked heptameric rings, resulting in a barrel-shaped structure. The two inner rings, each composed of seven catalytic beta subunits, are sandwiched by two outer rings, each composed of seven alpha subunits. The catalytic chamber with the active sites is on the inside of the barrel. Has a gated structure, the ends of the cylinder being occluded by the N-termini of the alpha-subunits. Is capped by the proteasome-associated ATPase, ARC.

Its subcellular location is the cytoplasm. It functions in the pathway protein degradation; proteasomal Pup-dependent pathway. Its activity is regulated as follows. The formation of the proteasomal ATPase ARC-20S proteasome complex, likely via the docking of the C-termini of ARC into the intersubunit pockets in the alpha-rings, may trigger opening of the gate for substrate entry. Interconversion between the open-gate and close-gate conformations leads to a dynamic regulation of the 20S proteasome proteolysis activity. Component of the proteasome core, a large protease complex with broad specificity involved in protein degradation. This Frankia casuarinae (strain DSM 45818 / CECT 9043 / HFP020203 / CcI3) protein is Proteasome subunit alpha.